A 279-amino-acid chain; its full sequence is Nitrate import permease protein NrtB (279 aa).

A run of 5 helical transmembrane segments spans residues 25–45 (FLPY…ISAI), 91–111 (VAIG…VLGM), 149–169 (AIFV…AVGI), 200–220 (VPYV…AIVA), and 249–269 (IILA…LVAW). Residues 84–267 (ILISLQRVAI…LVGLSLDRLV (184 aa)) enclose the ABC transmembrane type-1 domain.

Belongs to the binding-protein-dependent transport system permease family. CysTW subfamily. The complex is composed of two ATP-binding proteins (NrtC and NrtD), two transmembrane proteins (NrtB) and a solute-binding protein (NrtA).

It is found in the cell inner membrane. In terms of biological role, part of the ABC transporter complex NrtABCD involved in nitrate uptake. The complex is probably also involved in nitrite transport. Probably responsible for the translocation of the substrate across the membrane. This is Nitrate import permease protein NrtB from Synechococcus elongatus (strain ATCC 33912 / PCC 7942 / FACHB-805) (Anacystis nidulans R2).